Here is a 147-residue protein sequence, read N- to C-terminus: Large ribosomal subunit protein uL13 (147 aa).

It belongs to the universal ribosomal protein uL13 family. Part of the 50S ribosomal subunit.

Its function is as follows. This protein is one of the early assembly proteins of the 50S ribosomal subunit, although it is not seen to bind rRNA by itself. It is important during the early stages of 50S assembly. This is Large ribosomal subunit protein uL13 from Rhodococcus erythropolis (strain PR4 / NBRC 100887).